The chain runs to 328 residues: Hairy/enhancer-of-split related with YRPW motif-like protein (328 aa).

Positions 1-54 (MKRPREPSGSDSESDGPIDVGREGELSQMARPLSTPSPSQMQARKKRRGIIEKR) are disordered. Positions 42 to 111 (QARKKRRGII…GGTGFFDARA (70 aa)) are transcriptional repression and interaction with NCOR1 and SIN3A. The bHLH domain occupies 43-98 (ARKKRRGIIEKRRRDRINSSLSELRRLVPTAFEKQGSSKLEKAEVLQMTVDHLKML). Residues 116–153 (FRSIGFRECLTEVIRYLGVLEGPSSRADPVRIRLLSHL) form the Orange domain. The disordered stretch occupies residues 236–272 (LLPSRGASSTRRARPLERPAAPLPAAPSGRATRGSHM).

It belongs to the HEY family. In terms of assembly, self-associates. Interacts with GATA4, GATA6, HES1, HEY1 and HEY2. Interacts with HDAC1, NCOR1 and SIN3A.

It is found in the nucleus. Downstream effector of Notch signaling which may be required for cardiovascular development. Transcriptional repressor which binds preferentially to the canonical E box sequence 5'-CACGTG-3'. Represses transcription by the cardiac transcriptional activators GATA4 and GATA6. In Bos taurus (Bovine), this protein is Hairy/enhancer-of-split related with YRPW motif-like protein (HEYL).